We begin with the raw amino-acid sequence, 431 residues long: Peptidase B (431 aa).

Residues K196 and D201 each contribute to the Mn(2+) site. Residue K208 is part of the active site. 3 residues coordinate Mn(2+): D219, D278, and E280. Residue R282 is part of the active site.

This sequence belongs to the peptidase M17 family. Homohexamer. Mn(2+) is required as a cofactor.

It is found in the cytoplasm. It carries out the reaction Release of an N-terminal amino acid, Xaa, from a peptide or arylamide. Xaa is preferably Glu or Asp but may be other amino acids, including Leu, Met, His, Cys and Gln.. Its function is as follows. Probably plays an important role in intracellular peptide degradation. In Serratia proteamaculans (strain 568), this protein is Peptidase B.